The following is a 257-amino-acid chain: 5-keto-4-deoxy-D-glucarate aldolase (257 aa).

Residue His-51 is the Proton acceptor of the active site. Gln-152 provides a ligand contact to substrate. Position 154 (Glu-154) interacts with Mg(2+). Residues Ser-179 and Asp-180 each contribute to the substrate site. Asp-180 serves as a coordination point for Mg(2+).

This sequence belongs to the HpcH/HpaI aldolase family. KDGluc aldolase subfamily. In terms of assembly, homohexamer; trimer of dimers. It depends on Mg(2+) as a cofactor.

It carries out the reaction 5-dehydro-4-deoxy-D-glucarate = 2-hydroxy-3-oxopropanoate + pyruvate. The catalysed reaction is 2-dehydro-3-deoxy-D-glucarate = 2-hydroxy-3-oxopropanoate + pyruvate. It functions in the pathway carbohydrate acid metabolism; galactarate degradation; D-glycerate from galactarate: step 2/3. Its function is as follows. Catalyzes the reversible retro-aldol cleavage of both 5-keto-4-deoxy-D-glucarate and 2-keto-3-deoxy-D-glucarate to pyruvate and tartronic semialdehyde. This Shigella boydii serotype 18 (strain CDC 3083-94 / BS512) protein is 5-keto-4-deoxy-D-glucarate aldolase.